Here is a 191-residue protein sequence, read N- to C-terminus: Thymidine kinase (191 aa).

ATP contacts are provided by residues 15-22 (GPMYSGKT) and 88-91 (DEAQ). Glu-89 serves as the catalytic Proton acceptor. Zn(2+) is bound by residues Cys-145, Cys-148, Cys-183, and Cys-186.

This sequence belongs to the thymidine kinase family. Homotetramer.

Its subcellular location is the cytoplasm. The catalysed reaction is thymidine + ATP = dTMP + ADP + H(+). The polypeptide is Thymidine kinase (Clostridium botulinum (strain Kyoto / Type A2)).